Reading from the N-terminus, the 441-residue chain is Trigger factor (441 aa).

The 86-residue stretch at 163–248 (GDQVVFDFVG…IKEVKKPVPA (86 aa)) folds into the PPIase FKBP-type domain.

The protein belongs to the FKBP-type PPIase family. Tig subfamily.

Its subcellular location is the cytoplasm. It carries out the reaction [protein]-peptidylproline (omega=180) = [protein]-peptidylproline (omega=0). Functionally, involved in protein export. Acts as a chaperone by maintaining the newly synthesized protein in an open conformation. Functions as a peptidyl-prolyl cis-trans isomerase. The chain is Trigger factor from Jannaschia sp. (strain CCS1).